Consider the following 200-residue polypeptide: Large ribosomal subunit protein uL4 (200 aa).

The disordered stretch occupies residues 42–65 (TRAQKTRSEVSGGGAKPWRQKGTG).

The protein belongs to the universal ribosomal protein uL4 family. In terms of assembly, part of the 50S ribosomal subunit.

Functionally, one of the primary rRNA binding proteins, this protein initially binds near the 5'-end of the 23S rRNA. It is important during the early stages of 50S assembly. It makes multiple contacts with different domains of the 23S rRNA in the assembled 50S subunit and ribosome. Forms part of the polypeptide exit tunnel. This is Large ribosomal subunit protein uL4 from Vibrio campbellii (strain ATCC BAA-1116).